The chain runs to 290 residues: Bifunctional protein FolD 1 (290 aa).

NADP(+) is bound by residues 172-174 and isoleucine 238; that span reads GAS.

The protein belongs to the tetrahydrofolate dehydrogenase/cyclohydrolase family. In terms of assembly, homodimer.

The catalysed reaction is (6R)-5,10-methylene-5,6,7,8-tetrahydrofolate + NADP(+) = (6R)-5,10-methenyltetrahydrofolate + NADPH. It catalyses the reaction (6R)-5,10-methenyltetrahydrofolate + H2O = (6R)-10-formyltetrahydrofolate + H(+). It participates in one-carbon metabolism; tetrahydrofolate interconversion. Functionally, catalyzes the oxidation of 5,10-methylenetetrahydrofolate to 5,10-methenyltetrahydrofolate and then the hydrolysis of 5,10-methenyltetrahydrofolate to 10-formyltetrahydrofolate. This chain is Bifunctional protein FolD 1, found in Pseudomonas putida (strain GB-1).